The chain runs to 370 residues: 3-isopropylmalate dehydrogenase 2 (370 aa).

An NAD(+)-binding site is contributed by 77-90 (GPKWDAVPYEVRPE). 4 residues coordinate substrate: Arg97, Arg107, Arg135, and Asp226. Mg(2+) is bound by residues Asp226, Asp250, and Asp254. 290-302 (GSAPDIAGKGLAN) is an NAD(+) binding site.

The protein belongs to the isocitrate and isopropylmalate dehydrogenases family. LeuB type 1 subfamily. Homodimer. Mg(2+) serves as cofactor. It depends on Mn(2+) as a cofactor.

It is found in the cytoplasm. The catalysed reaction is (2R,3S)-3-isopropylmalate + NAD(+) = 4-methyl-2-oxopentanoate + CO2 + NADH. It functions in the pathway amino-acid biosynthesis; L-leucine biosynthesis; L-leucine from 3-methyl-2-oxobutanoate: step 3/4. In terms of biological role, catalyzes the oxidation of 3-carboxy-2-hydroxy-4-methylpentanoate (3-isopropylmalate) to 3-carboxy-4-methyl-2-oxopentanoate. The product decarboxylates to 4-methyl-2 oxopentanoate. This chain is 3-isopropylmalate dehydrogenase 2, found in Bradyrhizobium diazoefficiens (strain JCM 10833 / BCRC 13528 / IAM 13628 / NBRC 14792 / USDA 110).